Here is a 158-residue protein sequence, read N- to C-terminus: Snaclec coagulation factor X-activating enzyme light chain 2 (158 aa).

The signal sequence occupies residues 1–24 (MGRFISVSFGLLVVFLSLSGTGAG). Intrachain disulfides connect Cys27–Cys38, Cys55–Cys152, and Cys127–Cys144. Positions 34-153 (YRYFCYRVFK…CEERYLFVCK (120 aa)) constitute a C-type lectin domain. N-linked (GlcNAc...) (complex) asparagine glycosylation occurs at Asn82.

Belongs to the snaclec family. As to quaternary structure, heterotrimer; disulfide-linked. The heterotrimer consists of 1 heavy chain (a metalloproteinase) and 2 light chains: LC1 and LC2. N-glycosylated; probably required for conformation. Removal of easily accessible sugars does not change its functional capacity, but removal of the core sugars with N-glycanase causes a virtually complete loss of enzyme activity, apparently as a result of major conformational changes in the molecule. Not O-glycosylated. As to expression, expressed by the venom gland.

Its subcellular location is the secreted. Functionally, regulatory subunit of the blood coagulation factor X- and IX-activating enzyme. The enzyme activates coagulation factor X (F10) by cleaving the Arg-Ile bond and is also able to activate coagulation factor IX (F9) and protein S (PROS1) by specific cleavage of Arg-Ile and Arg-Val bonds. May serve as an exosite by which the enzyme recognizes and binds to the Gla domain of factor X (F10) and factor IX (F9) in a calcium-dependent manner. The polypeptide is Snaclec coagulation factor X-activating enzyme light chain 2 (LC2) (Daboia siamensis (Eastern Russel's viper)).